Consider the following 361-residue polypeptide: Chorismate synthase (361 aa).

Arg48 and Arg54 together coordinate NADP(+). FMN-binding positions include Arg125–Ser127, Asn238–Ala239, Gly278, Lys293–Ser297, and Arg319.

It belongs to the chorismate synthase family. Homotetramer. Requires FMNH2 as cofactor.

It catalyses the reaction 5-O-(1-carboxyvinyl)-3-phosphoshikimate = chorismate + phosphate. The protein operates within metabolic intermediate biosynthesis; chorismate biosynthesis; chorismate from D-erythrose 4-phosphate and phosphoenolpyruvate: step 7/7. Catalyzes the anti-1,4-elimination of the C-3 phosphate and the C-6 proR hydrogen from 5-enolpyruvylshikimate-3-phosphate (EPSP) to yield chorismate, which is the branch point compound that serves as the starting substrate for the three terminal pathways of aromatic amino acid biosynthesis. This reaction introduces a second double bond into the aromatic ring system. This Escherichia coli (strain SE11) protein is Chorismate synthase.